The sequence spans 763 residues: Elongation factor G, mitochondrial (763 aa).

The N-terminal 52 residues, 1-52 (MFMRLKVLEMNSIRRQTLLRQFTNVYNVVSRSARLCSQAIPKRLFYSTGSRA), are a transit peptide targeting the mitochondrion. The tr-type G domain maps to 60–347 (SRLRNIGISA…AVCDYLPNPS (288 aa)). GTP contacts are provided by residues 69-76 (AHIDSGKT), 145-149 (DTPGH), and 199-202 (NKMD).

It belongs to the TRAFAC class translation factor GTPase superfamily. Classic translation factor GTPase family. EF-G/EF-2 subfamily.

It localises to the mitochondrion. The protein operates within protein biosynthesis; polypeptide chain elongation. Mitochondrial GTPase that catalyzes the GTP-dependent ribosomal translocation step during translation elongation. During this step, the ribosome changes from the pre-translocational (PRE) to the post-translocational (POST) state as the newly formed A-site-bound peptidyl-tRNA and P-site-bound deacylated tRNA move to the P and E sites, respectively. Catalyzes the coordinated movement of the two tRNA molecules, the mRNA and conformational changes in the ribosome. The protein is Elongation factor G, mitochondrial (mef1) of Schizosaccharomyces japonicus (strain yFS275 / FY16936) (Fission yeast).